The primary structure comprises 66 residues: Large ribosomal subunit protein bL35 (66 aa).

2 stretches are compositionally biased toward basic residues: residues 1–15 and 24–40; these read MPKL…KRFK and HAQR…TKKQ. The interval 1–40 is disordered; the sequence is MPKLKTKSGAKKRFKVTGTGKVMHAQRGKRHGMIKRTKKQ.

Belongs to the bacterial ribosomal protein bL35 family.

The protein is Large ribosomal subunit protein bL35 of Bradyrhizobium sp. (strain ORS 278).